We begin with the raw amino-acid sequence, 493 residues long: Probable cytosol aminopeptidase (493 aa).

Residues lysine 262 and aspartate 267 each contribute to the Mn(2+) site. The active site involves lysine 274. The Mn(2+) site is built by aspartate 286, aspartate 345, and glutamate 347. Residue arginine 349 is part of the active site.

It belongs to the peptidase M17 family. Mn(2+) is required as a cofactor.

The protein resides in the cytoplasm. The catalysed reaction is Release of an N-terminal amino acid, Xaa-|-Yaa-, in which Xaa is preferably Leu, but may be other amino acids including Pro although not Arg or Lys, and Yaa may be Pro. Amino acid amides and methyl esters are also readily hydrolyzed, but rates on arylamides are exceedingly low.. It catalyses the reaction Release of an N-terminal amino acid, preferentially leucine, but not glutamic or aspartic acids.. In terms of biological role, presumably involved in the processing and regular turnover of intracellular proteins. Catalyzes the removal of unsubstituted N-terminal amino acids from various peptides. In Cyanothece sp. (strain PCC 7425 / ATCC 29141), this protein is Probable cytosol aminopeptidase.